Here is an 848-residue protein sequence, read N- to C-terminus: Translation initiation factor IF-2 (848 aa).

Residues 90-253 (RTYIKRAELQ…PKEKRHAFER (164 aa)) are disordered. Residues 105–170 (EAPAPEEPVQ…SAEPAIAPED (66 aa)) show a composition bias toward low complexity. Basic residues-rich tracts occupy residues 204–215 (PKKKQAGHRGPR) and 236–248 (KPLR…KEKR). One can recognise a tr-type G domain in the interval 344-511 (KRAPVVSVMG…AVLLQAEILE (168 aa)). The interval 353–360 (GHVDHGKT) is G1. 353 to 360 (GHVDHGKT) is a GTP binding site. The interval 378-382 (GITQH) is G2. The segment at 399 to 402 (DTPG) is G3. GTP contacts are provided by residues 399–403 (DTPGH) and 453–456 (NKMD). The segment at 453-456 (NKMD) is G4. A G5 region spans residues 489–491 (SAH).

This sequence belongs to the TRAFAC class translation factor GTPase superfamily. Classic translation factor GTPase family. IF-2 subfamily.

It localises to the cytoplasm. Functionally, one of the essential components for the initiation of protein synthesis. Protects formylmethionyl-tRNA from spontaneous hydrolysis and promotes its binding to the 30S ribosomal subunits. Also involved in the hydrolysis of GTP during the formation of the 70S ribosomal complex. The polypeptide is Translation initiation factor IF-2 (Marinobacter nauticus (strain ATCC 700491 / DSM 11845 / VT8) (Marinobacter aquaeolei)).